We begin with the raw amino-acid sequence, 956 residues long: Calsyntenin-3 (956 aa).

A signal peptide spans 1-19 (MTLLLVSLLLASLLQISSG). Residues 1–21 (MTLLLVSLLLASLLQISSGNK) are Cytoplasmic-facing. Over 20–847 (NKANKHKPWI…SHRNSMVPSA (828 aa)) the chain is Extracellular. Positions 22-42 (ANKHKPWIEAEYQGIVMENDN) form an intramembrane region, helical. 2 Cadherin domains span residues 29 to 145 (IEAE…APVF) and 146 to 246 (VERL…KPSW). Residues 43 to 73 (TVLLNPPLFALDKDAPLRYAGEICGFRLHGS) lie on the Cytoplasmic side of the membrane. The segment at residues 74 to 94 (GVPFEAVILDKATGEGLIRAK) is an intramembrane region (helical). Over 95 to 139 (EPVDCEAQKEHTFTIQAYDCGEGPDGTNTKKSHKATVHVRVNDVN) the chain is Cytoplasmic. The helical intramembrane region spans 140-160 (EFAPVFVERLYRAAVTEGKLY). The Cytoplasmic segment spans residues 161–248 (DRILRVEAID…KPTCKPSWQG (88 aa)). A helical membrane pass occupies residues 249 to 269 (WNKRIEYAPGAGSLALFPGIR). Over 270–357 (LETCDEPLWN…GTQAVQVPLG (88 aa)) the chain is Lumenal. Residues Asn299, Asn327, Asn347, Asn507, and Asn740 are each glycosylated (N-linked (GlcNAc...) asparagine). Residues 848-868 (ATLIIVVCVGFLVLMVILGLV) traverse the membrane as a helical segment. Over 869–956 (RIHSLHRRVS…RIIESPPHRY (88 aa)) the chain is Cytoplasmic. The disordered stretch occupies residues 916 to 956 (QTCVAGVAGGQQEEEDSSDSEAADSPSSDERRIIESPPHRY). Acidic residues predominate over residues 927-937 (QEEEDSSDSEA). Positions 943 to 956 (SDERRIIESPPHRY) are enriched in basic and acidic residues.

Belongs to the calsyntenin family. As to quaternary structure, interacts (via cadherin domains) with both alpha and beta isoforms of neurexins (NRXN1, NRXN2 and NRXN3). Directly interacts with APBA2. Forms a tripartite complex with APBA2 and APP. Interacts with low affinity with KLC1. Interacts with SLC23A2/SVCT2. In terms of assembly, interacts with CIDEA; inhibiting the lipid transferase activity of CIDEA. Interacts with CIDEC; inhibiting the lipid transferase activity of CIDEC. In terms of processing, proteolytically processed under normal cellular conditions. A primary zeta-cleavage generates a large extracellular (soluble) N-terminal domain (sAlc) and a short C-terminal transmembrane fragment (CTF1). A secondary cleavage catalyzed by gamma-secretase within the transmembrane domain releases the beta-Alc-beta chain in the extracellular milieu and produces an intracellular fragment (AlcICD). This processing is strongly suppressed in the tripartite complex formed with APBA2 and APP, which seems to prevent the association with gamma-secretase. Post-translationally, ubiquitinated: endoplasmic reticulum-localized protein is ubiquitinated and degraded by the endoplasmic reticulum-associated degradation (ERAD) pathway. As to expression, restricted to the brain (at protein level). In the cerebral cortex, found in the somas and neuropil of all layers. Expressed at highest levels in neurons of cortical layer 5 and, at lower levels, in neurons of the upper layers. Highly expressed in Purkinje cells. Also found in a few scattered interneurons throughout the granule cell layer and occasionally in neurons in the molecular layer (at protein level). In all layers, high levels in a subpopulation of presumptive GABAergic neurons (based on morphology). In terms of tissue distribution, expression is restricted to adipose tissue, with high expression in thermogenic adipocytes (brown adipose tissue).

It localises to the postsynaptic cell membrane. The protein resides in the endoplasmic reticulum membrane. The protein localises to the golgi apparatus membrane. It is found in the cell projection. Its subcellular location is the dendrite. It localises to the lipid droplet. In terms of biological role, postsynaptic adhesion molecule that binds to presynaptic neurexins to mediate both excitatory and inhibitory synapse formation. Promotes synapse development by acting as a cell adhesion molecule at the postsynaptic membrane, which associates with both neurexin-alpha and neurexin-beta proteins at the presynaptic membrane. Regulates the balance between excitatory and inhibitory synapses by inhibiting formation of excitatory parallel-fiber synapses and promoting formation of inhibitory synapses in the same neuron. May also be involved in ascorbate (vitamin C) uptake via its interaction with SLC23A2/SVCT2. Complex formation with APBA2 and APP, stabilizes APP metabolism and enhances APBA2-mediated suppression of beta-APP40 secretion, due to the retardation of intracellular APP maturation. Adipose-specific isoform that plays a key role in adaptive thermogenesis. Facilitates the efficient use of stored triglyceride by promoting multilocular morphology of thermogenic adipocytes: acts by inhibiting the activity of CIDEA and CIDEC on lipid droplets, thereby preventing lipid droplet fusion and facilitating lipid utilization. May also participate in adaptive thermogenesis by promoting sympathetic innervation of thermogenic adipose tissue: acts by driving secretion of neurotrophic factor S100B from brown adipocytes, stimulating neurite outgrowth from sympathetic neurons. The protein is Calsyntenin-3 of Mus musculus (Mouse).